The sequence spans 215 residues: NAD(P)H-quinone oxidoreductase subunit I (215 aa).

2 4Fe-4S ferredoxin-type domains span residues 55-84 (GRIHYEFDKCIACEVCVRVCPINLPVVDWV) and 95-124 (RNYSIDFGVCIFCGNCVEYCPTNCLSMTEE). Residues C64, C67, C70, C74, C104, C107, C110, and C114 each contribute to the [4Fe-4S] cluster site. Residues 166-215 (AGEMDPHGVPNDRPRAGQLPSQVLETLAPPAKVGAKNEGQSTGTTQEGEA) form a disordered region. Basic and acidic residues predominate over residues 169-180 (MDPHGVPNDRPR). Residues 203–215 (EGQSTGTTQEGEA) show a composition bias toward polar residues.

The protein belongs to the complex I 23 kDa subunit family. NDH-1 is composed of at least 11 different subunits. [4Fe-4S] cluster serves as cofactor.

It localises to the cellular thylakoid membrane. The enzyme catalyses a plastoquinone + NADH + (n+1) H(+)(in) = a plastoquinol + NAD(+) + n H(+)(out). The catalysed reaction is a plastoquinone + NADPH + (n+1) H(+)(in) = a plastoquinol + NADP(+) + n H(+)(out). NDH-1 shuttles electrons from an unknown electron donor, via FMN and iron-sulfur (Fe-S) centers, to quinones in the respiratory and/or the photosynthetic chain. The immediate electron acceptor for the enzyme in this species is believed to be plastoquinone. Couples the redox reaction to proton translocation, and thus conserves the redox energy in a proton gradient. The polypeptide is NAD(P)H-quinone oxidoreductase subunit I (Parasynechococcus marenigrum (strain WH8102)).